Here is a 380-residue protein sequence, read N- to C-terminus: MLEKQRSTAETFGIPLAVLLEITHRCPLQCPYCSNPVELDRSGKELTTDEWKKVLSELAEIGVLQVHFSGGEPTARKDLVELVKHASDVGLYTNLITSAVLLTRERLSELADAGLCHVQISFQGVEEGLADRVAGYRNAHRKKLEVAKWTRELDLPLTVNAVMHRQNLHQLPDIIQMSIDLDADRLEVANVQYYGWALKNRAALMPTVAQLDECTRLVEEARERLKGRLSIDYVVPDYYALRPKKCMGGWGRQFFNISPAGKVLPCHAAESITGLDFESVRSNHSIAWIWQNSEAFNRYRGTGWMKEPCKSCEFREIDFGGCRCQAFALTGDAANTDPACALSPLHETIFKQAEREAEGETNRFLYRNFAGGTLEPENDA.

The Radical SAM core domain occupies 12–228 (FGIPLAVLLE…EEARERLKGR (217 aa)). Residues C26, C30, and C33 each contribute to the [4Fe-4S] cluster site.

This sequence belongs to the radical SAM superfamily. PqqE family. In terms of assembly, interacts with PqqD. The interaction is necessary for activity of PqqE. The cofactor is [4Fe-4S] cluster.

The enzyme catalyses [PQQ precursor protein] + S-adenosyl-L-methionine = E-Y cross-linked-[PQQ precursor protein] + 5'-deoxyadenosine + L-methionine + H(+). The protein operates within cofactor biosynthesis; pyrroloquinoline quinone biosynthesis. Catalyzes the cross-linking of a glutamate residue and a tyrosine residue in the PqqA protein as part of the biosynthesis of pyrroloquinoline quinone (PQQ). In Bradyrhizobium diazoefficiens (strain JCM 10833 / BCRC 13528 / IAM 13628 / NBRC 14792 / USDA 110), this protein is PqqA peptide cyclase.